The sequence spans 186 residues: 2-oxoglutarate synthase subunit KorC (186 aa).

As to quaternary structure, heterotetramer of the KorA, KorB, KorC and KorD subunits.

The enzyme catalyses 2 oxidized [2Fe-2S]-[ferredoxin] + 2-oxoglutarate + CoA = succinyl-CoA + 2 reduced [2Fe-2S]-[ferredoxin] + CO2 + H(+). This Methanothermobacter marburgensis (strain ATCC BAA-927 / DSM 2133 / JCM 14651 / NBRC 100331 / OCM 82 / Marburg) (Methanobacterium thermoautotrophicum) protein is 2-oxoglutarate synthase subunit KorC (korC).